The primary structure comprises 229 residues: Large ribosomal subunit protein uL1 (229 aa).

Belongs to the universal ribosomal protein uL1 family. As to quaternary structure, part of the 50S ribosomal subunit.

Functionally, binds directly to 23S rRNA. The L1 stalk is quite mobile in the ribosome, and is involved in E site tRNA release. Its function is as follows. Protein L1 is also a translational repressor protein, it controls the translation of the L11 operon by binding to its mRNA. In Actinobacillus pleuropneumoniae serotype 5b (strain L20), this protein is Large ribosomal subunit protein uL1.